The primary structure comprises 286 residues: Bifunctional protein FolD (286 aa).

Residues 165-167, serine 190, and valine 231 contribute to the NADP(+) site; that span reads GRS.

Belongs to the tetrahydrofolate dehydrogenase/cyclohydrolase family. Homodimer.

The catalysed reaction is (6R)-5,10-methylene-5,6,7,8-tetrahydrofolate + NADP(+) = (6R)-5,10-methenyltetrahydrofolate + NADPH. The enzyme catalyses (6R)-5,10-methenyltetrahydrofolate + H2O = (6R)-10-formyltetrahydrofolate + H(+). Its pathway is one-carbon metabolism; tetrahydrofolate interconversion. In terms of biological role, catalyzes the oxidation of 5,10-methylenetetrahydrofolate to 5,10-methenyltetrahydrofolate and then the hydrolysis of 5,10-methenyltetrahydrofolate to 10-formyltetrahydrofolate. This chain is Bifunctional protein FolD, found in Bacillus cereus (strain B4264).